The chain runs to 270 residues: Type III pantothenate kinase (270 aa).

Asp6–Val13 provides a ligand contact to ATP. Gly107–Arg110 is a binding site for substrate. The Proton acceptor role is filled by Asp109. Asp129 contacts K(+). Thr132 provides a ligand contact to ATP. Thr184 lines the substrate pocket.

It belongs to the type III pantothenate kinase family. As to quaternary structure, homodimer. Requires NH4(+) as cofactor. K(+) serves as cofactor.

The protein localises to the cytoplasm. It carries out the reaction (R)-pantothenate + ATP = (R)-4'-phosphopantothenate + ADP + H(+). It participates in cofactor biosynthesis; coenzyme A biosynthesis; CoA from (R)-pantothenate: step 1/5. Catalyzes the phosphorylation of pantothenate (Pan), the first step in CoA biosynthesis. The polypeptide is Type III pantothenate kinase (Gluconobacter oxydans (strain 621H) (Gluconobacter suboxydans)).